Consider the following 332-residue polypeptide: Cysteine and histidine-rich domain-containing protein 1 (332 aa).

Residue Ala-2 is modified to N-acetylalanine. The interaction with PPP5C stretch occupies residues 2 to 77; it reads ALLCYNRGCG…KPPESVKPEV (76 aa). Zn(2+) contacts are provided by Cys-5, Cys-10, Cys-24, His-27, Cys-42, and Cys-43. CHORD domains lie at 5 to 64 and 157 to 216; these read CYNR…KGRH and CKNG…KGKH. The residue at position 47 (Thr-47) is a Phosphothreonine. Ser-51 bears the Phosphoserine mark. Cys-59, His-64, Cys-157, Cys-162, Cys-176, His-179, Cys-194, Cys-195, Cys-211, and His-216 together coordinate Zn(2+). The segment at 62-81 is disordered; that stretch reads GRHNSEKPPESVKPEVKTTE. A compositionally biased stretch (basic and acidic residues) spans 64–81; sequence HNSEKPPESVKPEVKTTE. The segment at 65–316 is interaction with HSP90AA1 and HSP90AB1; the sequence is NSEKPPESVK…AEPMQWASLE (252 aa). Residues 227–316 form the CS domain; that stretch reads VVPCRHDWHQ…AEPMQWASLE (90 aa).

In terms of assembly, interacts with HSP90AA1, HSP90AB1, PPP5C, ROCK1 and ROCK2.

Functionally, regulates centrosome duplication, probably by inhibiting the kinase activity of ROCK2. Proposed to act as co-chaperone for HSP90. May play a role in the regulation of NOD1 via a HSP90 chaperone complex. In vitro, has intrinsic chaperone activity. This function may be achieved by inhibiting association of ROCK2 with NPM1. Plays a role in ensuring the localization of the tyrosine kinase receptor EGFR to the plasma membrane, and thus ensures the subsequent regulation of EGFR activity and EGF-induced actin cytoskeleton remodeling. Involved in stress response. Prevents tumorigenesis. This is Cysteine and histidine-rich domain-containing protein 1 (CHORDC1) from Pongo abelii (Sumatran orangutan).